Here is a 292-residue protein sequence, read N- to C-terminus: Lipoyl synthase (292 aa).

[4Fe-4S] cluster contacts are provided by C38, C43, C49, C64, C68, C71, and S277. One can recognise a Radical SAM core domain in the interval 50–266; sequence WSKGTATFML…KNRAESLGFR (217 aa).

The protein belongs to the radical SAM superfamily. Lipoyl synthase family. Requires [4Fe-4S] cluster as cofactor.

It localises to the cytoplasm. It carries out the reaction [[Fe-S] cluster scaffold protein carrying a second [4Fe-4S](2+) cluster] + N(6)-octanoyl-L-lysyl-[protein] + 2 oxidized [2Fe-2S]-[ferredoxin] + 2 S-adenosyl-L-methionine + 4 H(+) = [[Fe-S] cluster scaffold protein] + N(6)-[(R)-dihydrolipoyl]-L-lysyl-[protein] + 4 Fe(3+) + 2 hydrogen sulfide + 2 5'-deoxyadenosine + 2 L-methionine + 2 reduced [2Fe-2S]-[ferredoxin]. The protein operates within protein modification; protein lipoylation via endogenous pathway; protein N(6)-(lipoyl)lysine from octanoyl-[acyl-carrier-protein]: step 2/2. Catalyzes the radical-mediated insertion of two sulfur atoms into the C-6 and C-8 positions of the octanoyl moiety bound to the lipoyl domains of lipoate-dependent enzymes, thereby converting the octanoylated domains into lipoylated derivatives. In Chlorobium limicola (strain DSM 245 / NBRC 103803 / 6330), this protein is Lipoyl synthase.